We begin with the raw amino-acid sequence, 557 residues long: Nucleoporin AMO1 (557 aa).

A C3H1-type zinc finger spans residues 1 to 25; it reads MTVCRFWQQGYCRNGNACKFEHPPK. A coiled-coil region spans residues 114-141; it reads QGALNEIQAAYQAAQQQIQNTLQNIPAA. Residues 161–297 form a disordered region; the sequence is ESSKGSSTGG…SALGPKPGAF (137 aa). SXFG repeat units lie at residues 171 to 174, 200 to 203, 213 to 216, 228 to 231, 240 to 243, 249 to 252, 262 to 265, 282 to 285, 303 to 306, and 314 to 317; these read SVFG, SAFG, STFG, and SPFG. Residues 195-215 are compositionally biased toward polar residues; it reads STPSTSAFGQPSPLGQKSSAF. A compositionally biased stretch (polar residues) spans 243 to 253; it reads GSPQTGSTFGQ. Positions 315-463 are disordered; that stretch reads PFGAAAQATQ…DLLSYATKNP (149 aa). Composition is skewed to polar residues over residues 321–338 and 351–366; these read QATQ…QAAN and GQPS…GQPS. SXFG repeat units follow at residues 348 to 351, 370 to 373, 387 to 390, and 407 to 410; these read SAFG and SLFG. The segment covering 367–385 has biased composition (low complexity); it reads TQSSAFGQQQPQQAGTFGS. Residues 388–429 show a composition bias toward polar residues; that stretch reads LFGQQQQQPSNVFGQPSTTSAFGSQAATSGFSQLGNATSTIG. Over residues 430–443 the composition is skewed to low complexity; sequence ASPAGAQAPASKSP.

The nuclear pore complex (NPC) constitutes the exclusive means of nucleocytoplasmic transport. NPCs allow the passive diffusion of ions and small molecules and the active, nuclear transport receptor-mediated bidirectional transport of macromolecules such as proteins, RNAs, ribonucleoparticles (RNPs), and ribosomal subunits across the nuclear envelope. The 55-60 MDa NPC is composed of at least 28 different subunits: AMO1, ELYS, GLE1, GLE2, MLP1, NDC1, NIC96, NSP1, NUP133, NUP145, NUP152, NUP159, NUP170, NUP188, NUP192, NUP37, NUP49, NUP53, NUP56, NUP57, NUP82, NUP84, NUP85, POM152, POM33, POM34, SEC13 and SEH1. Due to its 8-fold rotational symmetry, all subunits are present with 8 copies or multiples thereof.

The protein resides in the nucleus. Its subcellular location is the nuclear pore complex. It is found in the nucleus membrane. Functionally, functions as a component of the nuclear pore complex (NPC). NPC components, collectively referred to as nucleoporins (NUPs), can play the role of both NPC structural components and of docking or interaction partners for transiently associated nuclear transport factors. Active directional transport is assured by both, a Phe-Gly (FG) repeat affinity gradient for these transport factors across the NPC and a transport cofactor concentration gradient across the nuclear envelope (GSP1 and GSP2 GTPases associated predominantly with GTP in the nucleus, with GDP in the cytoplasm). AMO1 is specifically important for nuclear protein and mRNA export. The chain is Nucleoporin AMO1 (AMO1) from Chaetomium thermophilum (strain DSM 1495 / CBS 144.50 / IMI 039719) (Thermochaetoides thermophila).